The primary structure comprises 332 residues: Processive diacylglycerol alpha-glucosyltransferase (332 aa).

Belongs to the glycosyltransferase group 1 family. Glycosyltransferase 4 subfamily. Requires Mg(2+) as cofactor.

It is found in the cell membrane. It catalyses the reaction a 1,2-diacyl-sn-glycerol + UDP-alpha-D-glucose = a 1,2-diacyl-3-O-(alpha-D-glucopyranosyl)-sn-glycerol + UDP + H(+). It carries out the reaction a 1,2-diacyl-3-O-(alpha-D-glucopyranosyl)-sn-glycerol + UDP-alpha-D-glucose = a 1,2-diacyl-3-O-[alpha-D-glucosyl-(1-&gt; 2)-alpha-D-glucosyl]-sn-glycerol + UDP + H(+). It participates in glycolipid metabolism; diglucosyl-diacylglycerol biosynthesis. With respect to regulation, activated by the negatively charged lipids phosphatidylglycerol (PG), cardiolipin (CL), nonbilayer-prone 1,3-DAG, 1,2-dioleoylphosphatidylglycerol (DOPG) and 1,2-dioleoylphosphatidylserine (DOPS). Inhibited by 1,2-diacyl-3-O-(alpha-D-galactopyranosyl)-sn-glycerol, 1,2-diacyl-3-O-[6-O-acyl(alpha-D-glucopyranosyl)]-sn-glycerol and 1,2-diacyl-3-O-[alpha-D-glucopyranosyl-(1-&gt;2)-O-(6-O-acyl-alpha-D-glucopyranosyl)]-sn-glycerol. In terms of biological role, processive glucosyltransferase involved in the biosynthesis of both the non-bilayer-prone alpha-monoglucosyldiacylglycerol and the bilayer-forming membrane lipid alpha-diglucosyldiacylglycerol. These are major components for maintaining the anionic lipid surface charge density, for balancing the bilayer to non-bilayer phase equilibria and for keeping a constant lipid bilayer spontaneous curvature (curvature packing stress). Catalyzes the transfer of a glucosyl residue from UDP-Glc to diacylglycerol (DAG) acceptor to form the corresponding alpha-glucosyl-DAG (1,2-diacyl-3-O-(alpha-D-glucopyranosyl)-sn-glycerol), which then acts as acceptor to give alpha-diglucosyl-DAG product (3-O-(alpha-D-glucopyranosyl-alpha-(1-&gt;2)-D-glucopyranosyl)-1,2-diacyl-sn-glycerol). It can only use UDP-Glc as sugar donor. The sequence is that of Processive diacylglycerol alpha-glucosyltransferase (dgs) from Acholeplasma laidlawii.